We begin with the raw amino-acid sequence, 430 residues long: Enolase (430 aa).

Q167 is a (2R)-2-phosphoglycerate binding site. The active-site Proton donor is the E209. Residues D245, E286, and D313 each coordinate Mg(2+). Residues K338, R367, S368, and K389 each contribute to the (2R)-2-phosphoglycerate site. K338 acts as the Proton acceptor in catalysis.

The protein belongs to the enolase family. Mg(2+) is required as a cofactor.

Its subcellular location is the cytoplasm. It is found in the secreted. The protein resides in the cell surface. It carries out the reaction (2R)-2-phosphoglycerate = phosphoenolpyruvate + H2O. Its pathway is carbohydrate degradation; glycolysis; pyruvate from D-glyceraldehyde 3-phosphate: step 4/5. In terms of biological role, catalyzes the reversible conversion of 2-phosphoglycerate (2-PG) into phosphoenolpyruvate (PEP). It is essential for the degradation of carbohydrates via glycolysis. This Synechococcus sp. (strain WH7803) protein is Enolase.